Here is a 264-residue protein sequence, read N- to C-terminus: 14-3-3-like protein GF14-A (264 aa).

The disordered stretch occupies residues 245-264 (DMQDDGGDEMRDATKPEDEH). Residues 252-264 (DEMRDATKPEDEH) are compositionally biased toward basic and acidic residues.

It belongs to the 14-3-3 family.

Functionally, is associated with a DNA binding complex that binds to the G box, a well-characterized cis-acting DNA regulatory element found in plant genes. This chain is 14-3-3-like protein GF14-A (GF14A), found in Oryza sativa subsp. japonica (Rice).